Here is a 219-residue protein sequence, read N- to C-terminus: MPLIYVLDTSAVTDPRLREIFGVKTLDGVVREYARLLIRSHIVLGAEFYTTPSTALELRSFLERNNVSREAIDMLMGAITIRSPDLYTTRIPAIIMSDWIHDMLIRITKGLRVAEDSVRRAARRGYDYGVAQDKKGFEESVAETIHELREKYREATRKGVIDTRVDFDLVVLAHEINGELVTNDTGIMKLCMQIGVKYIEPPRFINKLFLLLRERTGRV.

It belongs to the HARP family.

The enzyme catalyses Endonucleolytic cleavage of RNA, removing 5'-extranucleotides from tRNA precursor.. Its function is as follows. RNA-free RNase P that catalyzes the removal of the 5'-leader sequence from pre-tRNA to produce the mature 5'-terminus. The sequence is that of RNA-free ribonuclease P from Staphylothermus marinus (strain ATCC 43588 / DSM 3639 / JCM 9404 / F1).